A 445-amino-acid polypeptide reads, in one-letter code: DDB1- and CUL4-associated factor 13 (445 aa).

WD repeat units lie at residues 64-104 (GHRD…CTRT), 107-146 (AHEGFVRGICSRFCGTSFFTVGDDKTIKQWNMEAPGYGVR), 154-191 (LGKAVFTGIDHHQREGTFVTCGQTVDIWDEQRSSPVLS), 194-234 (WGVD…PLRK), 236-276 (IMQL…VPVT), 280-319 (DHVSAVLDVDYSPTGREFVSASFDKTIRIFPKDKGHSREV), and 323-362 (KRMQHVICVKWSADSKFIMSGSDEMNIRLWKANASEKLGV). Residues 353–441 (KANASEKLGV…LLTEKEKHVV (89 aa)) form a required for nucleolar location region. The tract at residues 411–434 (KEARRRKEQNVRKHSKPGSVPLLT) is disordered. Residues 413 to 426 (ARRRKEQNVRKHSK) show a composition bias toward basic residues.

Belongs to the WD repeat DCAF13/WDSOF1 family. In terms of assembly, part of the small subunit (SSU) processome, composed of more than 70 proteins and the RNA chaperone small nucleolar RNA (snoRNA) U3. Component of the DCX(DCAF13) E3 ubiquitin ligase complex, at least composed of CUL4 (CUL4A or CUL4B), DDB1, DCAF13 and RBX1.

It localises to the nucleus. Its subcellular location is the nucleolus. The protein operates within protein modification; protein ubiquitination. Its function is as follows. Part of the small subunit (SSU) processome, first precursor of the small eukaryotic ribosomal subunit. During the assembly of the SSU processome in the nucleolus, many ribosome biogenesis factors, an RNA chaperone and ribosomal proteins associate with the nascent pre-rRNA and work in concert to generate RNA folding, modifications, rearrangements and cleavage as well as targeted degradation of pre-ribosomal RNA by the RNA exosome. Substrate-recognition component of a DCX (DDB1-CUL4-X-box) E3 ubiquitin-protein ligase complex. In Danio rerio (Zebrafish), this protein is DDB1- and CUL4-associated factor 13 (dcaf13).